Reading from the N-terminus, the 252-residue chain is Large ribosomal subunit protein uL4 (252 aa).

The protein belongs to the universal ribosomal protein uL4 family. In terms of assembly, part of the 50S ribosomal subunit.

One of the primary rRNA binding proteins, this protein initially binds near the 5'-end of the 23S rRNA. It is important during the early stages of 50S assembly. It makes multiple contacts with different domains of the 23S rRNA in the assembled 50S subunit and ribosome. Functionally, forms part of the polypeptide exit tunnel. The protein is Large ribosomal subunit protein uL4 of Archaeoglobus fulgidus (strain ATCC 49558 / DSM 4304 / JCM 9628 / NBRC 100126 / VC-16).